The chain runs to 285 residues: Pantothenate synthetase (285 aa).

30–37 (MGNLHDGH) contributes to the ATP binding site. H37 serves as the catalytic Proton donor. Q61 contacts (R)-pantoate. Position 61 (Q61) interacts with beta-alanine. 149-152 (GEKD) lines the ATP pocket. (R)-pantoate is bound at residue Q155. Residues I178 and 186-189 (FSSR) each bind ATP.

This sequence belongs to the pantothenate synthetase family. As to quaternary structure, homodimer.

The protein localises to the cytoplasm. It catalyses the reaction (R)-pantoate + beta-alanine + ATP = (R)-pantothenate + AMP + diphosphate + H(+). It functions in the pathway cofactor biosynthesis; (R)-pantothenate biosynthesis; (R)-pantothenate from (R)-pantoate and beta-alanine: step 1/1. In terms of biological role, catalyzes the condensation of pantoate with beta-alanine in an ATP-dependent reaction via a pantoyl-adenylate intermediate. The protein is Pantothenate synthetase of Buchnera aphidicola subsp. Schizaphis graminum (strain Sg).